Here is a 159-residue protein sequence, read N- to C-terminus: MSHQFSPEEQAVLRIVQANLPDSLTPYADLAEQAGMTEAQVLELLGRLKASGAIRRFGASIKHQKTGWTHNAMVAWKVTPDQVDDCGRKAAEHSHISHVYYRPSSAPDWPYEMYTMIHGRSEAECLGVVEDVKRTTSLKEHAILRSLKELKKTSMTYFT.

152–157 (KTSMTY) contributes to the substrate binding site.

Belongs to the Ahb/Nir family. Forms a heterodimer composed of AhbA and AhbB.

The enzyme catalyses siroheme + 2 H(+) = 12,18-didecarboxysiroheme + 2 CO2. It participates in porphyrin-containing compound metabolism; protoheme biosynthesis. Its function is as follows. Involved in siroheme-dependent heme b biosynthesis. Catalyzes the decarboxylation of siroheme into didecarboxysiroheme. Siroheme is decarboxylated to monodecarboxysiroheme, which is in turn decarboxylated to didecarboxysiroheme. The polypeptide is Siroheme decarboxylase beta subunit (Desulfovibrio desulfuricans (strain ATCC 27774 / DSM 6949 / MB)).